The primary structure comprises 382 residues: Lipid-A-disaccharide synthase (382 aa).

It belongs to the LpxB family.

It carries out the reaction 2-N,3-O-bis[(3R)-3-hydroxytetradecanoyl]-alpha-D-glucosaminyl 1-phosphate + UDP-2-N,3-O-bis[(3R)-3-hydroxytetradecanoyl]-alpha-D-glucosamine = lipid A disaccharide (E. coli) + UDP + H(+). It catalyses the reaction a lipid X + a UDP-2-N,3-O-bis[(3R)-3-hydroxyacyl]-alpha-D-glucosamine = a lipid A disaccharide + UDP + H(+). Its pathway is glycolipid biosynthesis; lipid IV(A) biosynthesis; lipid IV(A) from (3R)-3-hydroxytetradecanoyl-[acyl-carrier-protein] and UDP-N-acetyl-alpha-D-glucosamine: step 5/6. In terms of biological role, condensation of UDP-2,3-diacylglucosamine and 2,3-diacylglucosamine-1-phosphate to form lipid A disaccharide, a precursor of lipid A, a phosphorylated glycolipid that anchors the lipopolysaccharide to the outer membrane of the cell. The chain is Lipid-A-disaccharide synthase from Escherichia coli O45:K1 (strain S88 / ExPEC).